The primary structure comprises 254 residues: UPF0173 protein YddR (254 aa).

It belongs to the UPF0173 family.

This chain is UPF0173 protein YddR (yddR), found in Bacillus subtilis (strain 168).